The sequence spans 141 residues: Ribosome-binding factor A (141 aa).

It belongs to the RbfA family. Monomer. Binds 30S ribosomal subunits, but not 50S ribosomal subunits or 70S ribosomes.

It localises to the cytoplasm. Its function is as follows. One of several proteins that assist in the late maturation steps of the functional core of the 30S ribosomal subunit. Associates with free 30S ribosomal subunits (but not with 30S subunits that are part of 70S ribosomes or polysomes). Required for efficient processing of 16S rRNA. May interact with the 5'-terminal helix region of 16S rRNA. This chain is Ribosome-binding factor A, found in Beijerinckia indica subsp. indica (strain ATCC 9039 / DSM 1715 / NCIMB 8712).